The primary structure comprises 324 residues: Methenyltetrahydromethanopterin cyclohydrolase (324 aa).

It belongs to the MCH family.

Its subcellular location is the cytoplasm. The catalysed reaction is 5,10-methenyl-5,6,7,8-tetrahydromethanopterin + H2O = N(5)-formyl-5,6,7,8-tetrahydromethanopterin + H(+). It participates in one-carbon metabolism; formaldehyde degradation; formate from formaldehyde (H(4)MPT route): step 3/5. Functionally, catalyzes the hydrolysis of methenyl-H(4)MPT(+) to 5-formyl-H(4)MPT. This Methylobacterium sp. (strain 4-46) protein is Methenyltetrahydromethanopterin cyclohydrolase.